A 618-amino-acid chain; its full sequence is UvrABC system protein C (618 aa).

Residues 20–98 form the GIY-YIG domain; that stretch reads TAPGVYRMYA…IKSLSPRYNV (79 aa). Positions 207-242 constitute a UVR domain; the sequence is DQLGEEIMHSMQQASEALEFERAARLRDLLSSLRSM.

It belongs to the UvrC family. In terms of assembly, interacts with UvrB in an incision complex.

It localises to the cytoplasm. The UvrABC repair system catalyzes the recognition and processing of DNA lesions. UvrC both incises the 5' and 3' sides of the lesion. The N-terminal half is responsible for the 3' incision and the C-terminal half is responsible for the 5' incision. This is UvrABC system protein C from Xanthomonas campestris pv. campestris (strain B100).